A 195-amino-acid chain; its full sequence is Imidazoleglycerol-phosphate dehydratase (195 aa).

It belongs to the imidazoleglycerol-phosphate dehydratase family.

The protein resides in the cytoplasm. It catalyses the reaction D-erythro-1-(imidazol-4-yl)glycerol 3-phosphate = 3-(imidazol-4-yl)-2-oxopropyl phosphate + H2O. The protein operates within amino-acid biosynthesis; L-histidine biosynthesis; L-histidine from 5-phospho-alpha-D-ribose 1-diphosphate: step 6/9. The chain is Imidazoleglycerol-phosphate dehydratase from Roseobacter denitrificans (strain ATCC 33942 / OCh 114) (Erythrobacter sp. (strain OCh 114)).